The chain runs to 313 residues: Solute carrier family 35 member E3 (313 aa).

Helical transmembrane passes span 17-37 (GLLFNLLVSICIVFLNKWIYV), 40-60 (GFPNMSLTLVHFVVTWLGLYI), 77-97 (LLLLALSFCGFVVFTNLSLQN), 126-143 (FSTRIQLTLIPITLGVIL), 153-173 (FLGMVFAALGVLVTSLYQVWV), 187-206 (LLYYQAPMSSAMLLVAVPFF), 225-245 (LMVLLSGVIAFMVNLSIYWII), 252-272 (TYNMFGHFKFCITLFGGYVLF), and 275-295 (PLSINQALGILCTLFGILAYT).

The protein belongs to the TPT transporter family. SLC35E subfamily.

It localises to the membrane. Its function is as follows. Putative transporter. In Homo sapiens (Human), this protein is Solute carrier family 35 member E3 (SLC35E3).